The sequence spans 250 residues: NADH-quinone oxidoreductase subunit C (250 aa).

It belongs to the complex I 30 kDa subunit family. In terms of assembly, NDH-1 is composed of 14 different subunits. Subunits NuoB, C, D, E, F, and G constitute the peripheral sector of the complex.

The protein resides in the cell inner membrane. The catalysed reaction is a quinone + NADH + 5 H(+)(in) = a quinol + NAD(+) + 4 H(+)(out). Functionally, NDH-1 shuttles electrons from NADH, via FMN and iron-sulfur (Fe-S) centers, to quinones in the respiratory chain. The immediate electron acceptor for the enzyme in this species is believed to be ubiquinone. Couples the redox reaction to proton translocation (for every two electrons transferred, four hydrogen ions are translocated across the cytoplasmic membrane), and thus conserves the redox energy in a proton gradient. The protein is NADH-quinone oxidoreductase subunit C of Xylella fastidiosa (strain 9a5c).